The sequence spans 201 residues: Small ribosomal subunit protein uS4 (201 aa).

Residues Cys-91 to Ile-157 enclose the S4 RNA-binding domain.

The protein belongs to the universal ribosomal protein uS4 family. Part of the 30S ribosomal subunit. Contacts protein S5. The interaction surface between S4 and S5 is involved in control of translational fidelity.

One of the primary rRNA binding proteins, it binds directly to 16S rRNA where it nucleates assembly of the body of the 30S subunit. In terms of biological role, with S5 and S12 plays an important role in translational accuracy. This Saccharopolyspora erythraea (strain ATCC 11635 / DSM 40517 / JCM 4748 / NBRC 13426 / NCIMB 8594 / NRRL 2338) protein is Small ribosomal subunit protein uS4.